The primary structure comprises 317 residues: tRNA dimethylallyltransferase (317 aa).

14–21 (GPTAVGKT) contributes to the ATP binding site. Position 16–21 (16–21 (TAVGKT)) interacts with substrate. The interaction with substrate tRNA stretch occupies residues 39 to 42 (DSMQ).

The protein belongs to the IPP transferase family. In terms of assembly, monomer. The cofactor is Mg(2+).

It carries out the reaction adenosine(37) in tRNA + dimethylallyl diphosphate = N(6)-dimethylallyladenosine(37) in tRNA + diphosphate. Catalyzes the transfer of a dimethylallyl group onto the adenine at position 37 in tRNAs that read codons beginning with uridine, leading to the formation of N6-(dimethylallyl)adenosine (i(6)A). This chain is tRNA dimethylallyltransferase, found in Bacillus cereus (strain AH820).